Reading from the N-terminus, the 479-residue chain is DNA polymerase IV (479 aa).

A UmuC domain is found at 7-189 (ILHLDMDAFF…MTVRTLPGVG (183 aa)). D11 and D105 together coordinate Mg(2+). Residue E106 is part of the active site. 2 disordered regions span residues 357–400 (AGDR…GHGW) and 430–479 (DPEL…TSRP). A compositionally biased stretch (basic and acidic residues) spans 381-396 (AERRWPSGHDVRHTEL).

The protein belongs to the DNA polymerase type-Y family. Monomer. The cofactor is Mg(2+).

Its subcellular location is the cytoplasm. It carries out the reaction DNA(n) + a 2'-deoxyribonucleoside 5'-triphosphate = DNA(n+1) + diphosphate. Functionally, poorly processive, error-prone DNA polymerase involved in untargeted mutagenesis. Copies undamaged DNA at stalled replication forks, which arise in vivo from mismatched or misaligned primer ends. These misaligned primers can be extended by PolIV. Exhibits no 3'-5' exonuclease (proofreading) activity. May be involved in translesional synthesis, in conjunction with the beta clamp from PolIII. This Streptomyces coelicolor (strain ATCC BAA-471 / A3(2) / M145) protein is DNA polymerase IV.